The primary structure comprises 74 residues: Protein krueppel (74 aa).

4 C2H2-type zinc fingers span residues 1 to 4, 10 to 32, 38 to 60, and 66 to 74; these read ERTH, FECSQCHKRFTRDHHLKTHMRLH, YHCTHCDRHFVQVANLRRHLRVH, and YACELCASR.

Belongs to the krueppel C2H2-type zinc-finger protein family.

The protein resides in the nucleus. Functionally, krueppel is a gap class segmentation protein. This chain is Protein krueppel (Kr), found in Euscelis plebejus (Leafhopper).